We begin with the raw amino-acid sequence, 490 residues long: E3 ubiquitin-protein ligase Hakai (490 aa).

A disordered region spans residues 34 to 60 (QANKAKPAPRTQRTINRMPAKAPPGDE). An RING-type zinc finger spans residues 108-148 (CDKCGLPIKIYGRMIPCKHVFCYDCAILHEKKGDKMCPGCS). The interval 147 to 205 (CSDPVQRIEQCTRGSLFMCSIVQGCKRTYLSQRDLQAHINHRHMRAGKPVTRASLENVH) is HYB domain. The segment at 163-189 (FMCSIVQGCKRTYLSQRDLQAHINHRH) adopts a C2H2-type zinc-finger fold. A phosphoserine mark is found at Ser-200, Ser-284, and Ser-289. The tract at residues 254-490 (QPHEDIRAPP…DQTRYRPYYQ (237 aa)) is disordered. 3 stretches are compositionally biased toward pro residues: residues 341–358 (APPP…PHPP), 371–388 (APPP…PPPG), and 398–422 (MNHP…PPHH). The segment covering 426 to 441 (NSLPQFTEDQGTLSPP) has biased composition (polar residues). Over residues 456–477 (PRGPPPPPRLQGPPSQTPLPGP) the composition is skewed to pro residues.

Belongs to the Hakai family. Homodimer. Interacts with tyrosine-phosphorylated SRC substrates. Component of the WMM complex, a N6-methyltransferase complex composed of a catalytic subcomplex, named MAC, and of an associated subcomplex, named MACOM. The MAC subcomplex is composed of METTL3 and METTL14. The MACOM subcomplex is composed of WTAP, ZC3H13, CBLL1/HAKAI, VIRMA, and, in some cases of RBM15 (RBM15 or RBM15B). Also a component of a MACOM-like complex, named WTAP complex, composed of WTAP, ZC3H13, CBLL1, VIRMA, RBM15, BCLAF1 and THRAP3. In terms of processing, phosphorylated on tyrosine residues.

The protein resides in the nucleus speckle. The protein localises to the nucleus. Its subcellular location is the nucleoplasm. It localises to the cytoplasm. It catalyses the reaction S-ubiquitinyl-[E2 ubiquitin-conjugating enzyme]-L-cysteine + [acceptor protein]-L-lysine = [E2 ubiquitin-conjugating enzyme]-L-cysteine + N(6)-ubiquitinyl-[acceptor protein]-L-lysine.. Its pathway is protein modification; protein ubiquitination. Functionally, E3 ubiquitin-protein ligase that mediates ubiquitination of several tyrosine-phosphorylated Src substrates, including CDH1, CTTN and DOK1. Targets CDH1 for endocytosis and degradation. Associated component of the WMM complex, a complex that mediates N6-methyladenosine (m6A) methylation of RNAs, a modification that plays a role in the efficiency of mRNA splicing and RNA processing. Its function in the WMM complex is unknown. The protein is E3 ubiquitin-protein ligase Hakai of Macaca fascicularis (Crab-eating macaque).